Reading from the N-terminus, the 157-residue chain is Heat shock protein beta-9 (157 aa).

Residues 1 to 17 (MQRVGSSLPSGSQSASQ) show a composition bias toward low complexity. Disordered stretches follow at residues 1–20 (MQRVGSSLPSGSQSASQCPS) and 136–157 (PPSEAQTGPASRFRSRGSKKLA). Positions 35-148 (QRLTEDAAAV…EAQTGPASRF (114 aa)) constitute a sHSP domain. Basic residues predominate over residues 148 to 157 (FRSRGSKKLA).

The protein belongs to the small heat shock protein (HSP20) family.

The protein resides in the cytoplasm. The protein localises to the nucleus. The protein is Heat shock protein beta-9 (HSPB9) of Bos taurus (Bovine).